The sequence spans 684 residues: Protein EXECUTER 1, chloroplastic (684 aa).

The segment covering 1-31 has biased composition (polar residues); the sequence is MPSLSTPPSQNLAFSPAASATSSRLTPSSKR. The transit peptide at 1 to 46 directs the protein to the chloroplast; that stretch reads MPSLSTPPSQNLAFSPAASATSSRLTPSSKRSFYPHRLPDPTALCR. The segment at 1-66 is disordered; that stretch reads MPSLSTPPSQ…SSSSSDDNPR (66 aa). Low complexity predominate over residues 48–61; that stretch reads SSSSGSNSSSSSSS. Positions 127-162 constitute a UVR domain; sequence DRLLSVLKSQLNRAIKREDYEDAARLKVAIAATATN. The segment at 278 to 318 is disordered; sequence TLTPGRFLTSPGRKEDTGNLAVESSEDEESDNSDDDSDLLE. Residues 301–318 are compositionally biased toward acidic residues; the sequence is SSEDEESDNSDDDSDLLE.

The protein localises to the plastid. It is found in the chloroplast. In terms of biological role, together with EX2, enables higher plants to perceive singlet oxygen as a stress signal in plastid that activates a genetically determined nuclear stress response program which triggers a programmed cell death (PCD). This transfer of singlet oxygen-induced stress-related signals from the plastid to the nucleus that triggers genetically controlled PCD pathway is unique to photosynthetic eukaryotes and operates under mild stress conditions, impeding photosystem II (PSII) without causing photooxidative damage of the plant. The chain is Protein EXECUTER 1, chloroplastic from Arabidopsis thaliana (Mouse-ear cress).